The sequence spans 236 residues: Transcription repressor MYB6 (236 aa).

HTH myb-type domains follow at residues 9-61 (KAHT…INYL) and 62-116 (RPDL…KRKL). 2 consecutive DNA-binding regions (H-T-H motif) follow at residues 37-61 (WRSL…INYL) and 89-112 (WSLI…NTHI). Positions 159-181 (PKTENSSDNGASTSGTTTDEDLR) are disordered. The span at 162–175 (ENSSDNGASTSGTT) shows a compositional bias: polar residues.

In terms of assembly, interacts with BHLH012/MYC1 and BHLH042/TT8. Expressed in roots, stems, flower buds, and siliques.

The protein localises to the nucleus. This is Transcription repressor MYB6 (MYB6) from Arabidopsis thaliana (Mouse-ear cress).